The sequence spans 1005 residues: PH and SEC7 domain-containing protein 4 (1005 aa).

Residues 27–66 (YPSEIHGHPGPSEPCQEHTCPFDPPESARPDAPHGNSGVE) form a disordered region. Phosphoserine occurs at positions 85, 88, and 97. 4 disordered regions span residues 145 to 189 (PSKD…PGSS), 287 to 386 (LALG…NRGE), 407 to 525 (TSLL…SSSR), and 694 to 714 (EEDA…KISS). Over residues 161–177 (EEDEDSGDDSSGPEEEN) the composition is skewed to acidic residues. Over residues 350 to 361 (SQTSQSLSDLTQ) the composition is skewed to low complexity. Residues Ser-381 and Ser-435 each carry the phosphoserine modification. The span at 428–438 (PVSSQDSSPRV) shows a compositional bias: low complexity. Composition is skewed to basic and acidic residues over residues 453–465 (LQKD…SLKE) and 476–488 (QEAE…RSED). The SEC7 domain occupies 493 to 686 (QHHVHLASAE…KALYWSIRSE (194 aa)). One can recognise a PH domain in the interval 726–841 (PTYKQGILAR…WIARINLAAA (116 aa)). A coiled-coil region spans residues 870–926 (SSLEEQHRSHENCLDAASDDLLDLQRNLPERRGRSRELEEYRLRKEYLEHEKTRYET). The segment at 951 to 1005 (KETDGSQEPRPSLKKSHSSPSLHQEEAPTTAKVKRNISERRTYRKIIPKRNRNQL) is disordered. Phosphoserine occurs at positions 968 and 971. Over residues 992 to 1005 (TYRKIIPKRNRNQL) the composition is skewed to basic residues.

It is found in the cell membrane. It localises to the cell projection. The protein resides in the ruffle membrane. Functionally, guanine nucleotide exchange factor for ARF6 and ARL14/ARF7. Through ARL14 activation, controls the movement of MHC class II-containing vesicles along the actin cytoskeleton in dendritic cells. Involved in membrane recycling. Interacts with several phosphatidylinositol phosphate species, including phosphatidylinositol 3,4-bisphosphate, phosphatidylinositol 3,5-bisphosphate and phosphatidylinositol 4,5-bisphosphate. In Mus musculus (Mouse), this protein is PH and SEC7 domain-containing protein 4 (Psd4).